We begin with the raw amino-acid sequence, 155 residues long: Ribosome maturation factor RimP (155 aa).

It belongs to the RimP family.

It is found in the cytoplasm. Its function is as follows. Required for maturation of 30S ribosomal subunits. The chain is Ribosome maturation factor RimP from Prochlorococcus marinus (strain MIT 9301).